Consider the following 234-residue polypeptide: Triosephosphate isomerase (234 aa).

8 to 10 lines the substrate pocket; it reads NFK. The active-site Electrophile is the His90. The active-site Proton acceptor is Glu159. The substrate site is built by Gly165 and Ser197.

The protein belongs to the triosephosphate isomerase family. As to quaternary structure, homodimer.

Its subcellular location is the cytoplasm. The enzyme catalyses D-glyceraldehyde 3-phosphate = dihydroxyacetone phosphate. The protein operates within carbohydrate biosynthesis; gluconeogenesis. Its pathway is carbohydrate degradation; glycolysis; D-glyceraldehyde 3-phosphate from glycerone phosphate: step 1/1. Its function is as follows. Involved in the gluconeogenesis. Catalyzes stereospecifically the conversion of dihydroxyacetone phosphate (DHAP) to D-glyceraldehyde-3-phosphate (G3P). This is Triosephosphate isomerase from Helicobacter acinonychis (strain Sheeba).